The primary structure comprises 91 residues: Virion membrane protein A14 homolog (91 aa).

Residues 1–12 lie on the Intravirion side of the membrane; that stretch reads MDPLGFFRNRPS. Residues 13–33 form a helical membrane-spanning segment; it reads YVVVFGIILLIVACICAYIEL. Residues 34–46 lie on the Virion surface side of the membrane; it reads SKSGKPADSALRS. A helical transmembrane segment spans residues 47–67; it reads ISIISFILAILLLLGIILFSG. The Intravirion segment spans residues 68 to 91; that stretch reads YNRYCTGNVVDESRYATSPGTEIQ.

This sequence belongs to the chordopoxvirinae A14 family. Homodimer; disulfide-linked. Interacts with A17. In terms of processing, phosphorylated by viral F10 kinase, phosphorylation state is regulated by H1 phosphatase.

The protein resides in the virion membrane. Envelope protein which is a major component of the mature virion (MV) membrane. Essential for membrane biogenesis. Is required, together with A17, to form bona fide crescents, which can progress to form the immature virion (IV) membrane. A14 and A17 form a lattice that is stabilized by disulfide bonds and serves as an anchor within the viral membrane to which several other proteins important in virion structure and morphogenesis attach. This chain is Virion membrane protein A14 homolog, found in Fowlpox virus (strain NVSL) (FPV).